The chain runs to 361 residues: Cyclin-Y-like protein 2 (361 aa).

In terms of domain architecture, Cyclin N-terminal spans 204-286 (MRLTAEFAIV…QFLKLINYNN (83 aa)).

This sequence belongs to the cyclin family. Cyclin Y subfamily.

The chain is Cyclin-Y-like protein 2 (CCNYL2) from Homo sapiens (Human).